The primary structure comprises 276 residues: Protein MGF 360-15R (276 aa).

Belongs to the asfivirus MGF 360 family.

In terms of biological role, plays a role in virus cell tropism, and may be required for efficient virus replication in macrophages. The polypeptide is Protein MGF 360-15R (Ornithodoros (relapsing fever ticks)).